Here is a 257-residue protein sequence, read N- to C-terminus: NAD kinase (257 aa).

Asp46 serves as the catalytic Proton acceptor. Residues Asp46–Gly47, Asn116–Glu117, Asp146, Ala154, Thr157–Ser162, and Asn218 each bind NAD(+).

The protein belongs to the NAD kinase family. A divalent metal cation is required as a cofactor.

It localises to the cytoplasm. The enzyme catalyses NAD(+) + ATP = ADP + NADP(+) + H(+). In terms of biological role, involved in the regulation of the intracellular balance of NAD and NADP, and is a key enzyme in the biosynthesis of NADP. Catalyzes specifically the phosphorylation on 2'-hydroxyl of the adenosine moiety of NAD to yield NADP. This is NAD kinase from Brucella melitensis biotype 1 (strain ATCC 23456 / CCUG 17765 / NCTC 10094 / 16M).